A 135-amino-acid chain; its full sequence is uncharacterized protein (135 aa).

The HotDog ACOT-type domain occupies 8-123 (PKGIIVLKTL…IFIYVAINKT (116 aa)).

This sequence belongs to the acyl coenzyme A hydrolase family.

This is an uncharacterized protein from Buchnera aphidicola subsp. Acyrthosiphon pisum (strain APS) (Acyrthosiphon pisum symbiotic bacterium).